Here is a 642-residue protein sequence, read N- to C-terminus: Dihydrolipoyllysine-residue acetyltransferase component of pyruvate dehydrogenase complex, mitochondrial (642 aa).

The N-terminal 85 residues, 1-85, are a transit peptide targeting the mitochondrion; sequence MWRVCARRAR…LLGSPSRRSY (85 aa). The segment at 80 to 99 is disordered; that stretch reads PSRRSYSLPPHQKVPLPSLS. Lipoyl-binding domains lie at 90-166 and 217-293; these read HQKV…CITV and HMQI…CIIV. Phosphoserine is present on serine 99. N6-lipoyllysine is present on residues lysine 131 and lysine 258. The tract at residues 313–346 is disordered; the sequence is LKPQAAPPAPPPVAAVPPTPQPVAPTPSAAPAGP. The span at 317 to 337 shows a compositional bias: pro residues; it reads AAPPAPPPVAAVPPTPQPVAP. The region spanning 351–388 is the Peripheral subunit-binding (PSBD) domain; sequence FVSPLAKKLAAEKGIDLTQVKGTGPEGRIIKKDIDSFV. A CoA-binding site is contributed by arginine 456. At lysine 461 the chain carries N6-acetyllysine. Lysine 468 carries the post-translational modification N6-succinyllysine. A CoA-binding site is contributed by serine 470. Position 542 is an N6-succinyllysine (lysine 542). 3 residues coordinate CoA: serine 561, asparagine 562, and glycine 586. Residues histidine 615 and aspartate 619 contribute to the active site.

The protein belongs to the 2-oxoacid dehydrogenase family. In terms of assembly, part of the pyruvate dehydrogenase complex (PDHc) that is a multi-enzyme complex composed of multiple copies of three enzymes, pyruvate dehydrogenase (subunits PDH1A and PDHB, E1 component), dihydrolipoamide acetyltransferase (DLAT, E2 component), and dihydrolipoamide dehydrogenase (DLD, E3 component) to which is added an additional protein the E3-binding protein (PDHX, E3BP). In terms of structural architecture, the E2 and E3BP components assemble into a 60meric central core with icosahedral symmetry. The central core is decorated with E1 and E3 proteins. Currently, two alternative models for the E2:E3BP stoichiometry are considered as being either 48:12 (E2(48)-E3BP(12)) or 40:20 (E2(40)-E3BP(20)). Interacts with PDK2 and PDK3. Interacts with SIRT4. Interacts with PDHB. It depends on (R)-lipoate as a cofactor. In terms of processing, delipoylated at Lys-131 and Lys-258 by SIRT4, delipoylation decreases the PHD complex activity.

It is found in the mitochondrion matrix. The enzyme catalyses N(6)-[(R)-dihydrolipoyl]-L-lysyl-[protein] + acetyl-CoA = N(6)-[(R)-S(8)-acetyldihydrolipoyl]-L-lysyl-[protein] + CoA. Functionally, as part of the pyruvate dehydrogenase complex, catalyzes the transfers of an acetyl group to a lipoic acid moiety. The pyruvate dehydrogenase complex, catalyzes the overall conversion of pyruvate to acetyl-CoA and CO(2), and thereby links cytoplasmic glycolysis and the mitochondrial tricarboxylic acid (TCA) cycle. In Mus musculus (Mouse), this protein is Dihydrolipoyllysine-residue acetyltransferase component of pyruvate dehydrogenase complex, mitochondrial.